We begin with the raw amino-acid sequence, 348 residues long: Uroporphyrinogen decarboxylase (348 aa).

Substrate-binding positions include 27–31, F46, D76, Y152, S207, and H320; that span reads RQAGR.

The protein belongs to the uroporphyrinogen decarboxylase family. Homodimer.

It is found in the cytoplasm. The catalysed reaction is uroporphyrinogen III + 4 H(+) = coproporphyrinogen III + 4 CO2. It functions in the pathway porphyrin-containing compound metabolism; protoporphyrin-IX biosynthesis; coproporphyrinogen-III from 5-aminolevulinate: step 4/4. Its function is as follows. Catalyzes the decarboxylation of four acetate groups of uroporphyrinogen-III to yield coproporphyrinogen-III. In Bacillus thuringiensis (strain Al Hakam), this protein is Uroporphyrinogen decarboxylase.